The chain runs to 732 residues: E3 ubiquitin-protein ligase hel2 (732 aa).

The disordered stretch occupies residues 1-48 (MSPSGPNLNNKEHNRASEKKNSRTHNKKTNRNQSKEKPVSSRSVETPK). Residues 10–21 (NKEHNRASEKKN) show a composition bias toward basic and acidic residues. The RING-type zinc finger occupies 81–121 (CFICAEGITYSCVLPCNHRMCHVCALRLRALYKTKECTFCK). Residues 245–315 (PKCEFCNTHF…RECLERKFVV (71 aa)) form the LIM zinc-binding domain. Disordered stretches follow at residues 345–380 (IIPQ…NETA), 411–501 (DFGF…QHQQ), and 623–732 (HDGP…FHIG). 2 stretches are compositionally biased toward polar residues: residues 366–380 (SSTP…NETA) and 415–433 (TLSN…TRTI). Positions 457-468 (SSSAPSVPVSAP) are enriched in low complexity. A Phosphoserine modification is found at Ser482. 2 stretches are compositionally biased toward polar residues: residues 490-501 (PMASSEQAQHQQ) and 629-654 (SAPS…NTPS). Residues 701–713 (STPNTSSNRNSNT) are compositionally biased toward low complexity.

This sequence belongs to the ZNF598/HEL2 family.

The protein localises to the cytoplasm. The enzyme catalyses S-ubiquitinyl-[E2 ubiquitin-conjugating enzyme]-L-cysteine + [acceptor protein]-L-lysine = [E2 ubiquitin-conjugating enzyme]-L-cysteine + N(6)-ubiquitinyl-[acceptor protein]-L-lysine.. The protein operates within protein modification; protein ubiquitination. Its function is as follows. E3 ubiquitin-protein ligase that plays a key role in the ribosome quality control (RQC), a pathway that takes place when a ribosome has stalled during translation, leading to degradation of nascent peptide chains. Activated when ribosomes are stalled within an mRNA following translation of prematurely polyadenylated mRNAs. Acts as a ribosome collision sensor: specifically recognizes and binds collided ribosome and ubiquitinates the 40S ribosomal proteins rps20/uS10 and rps3/uS3. Catalyzes 'Lys-63'-linked polyubiquitination of rps20/uS10, promoting recruitment of the RQT (ribosome quality control trigger) complex, which drives the disassembly of stalled ribosomes, followed by degradation of nascent peptides. This Schizosaccharomyces pombe (strain 972 / ATCC 24843) (Fission yeast) protein is E3 ubiquitin-protein ligase hel2.